Consider the following 401-residue polypeptide: Protein IQ-DOMAIN 24 (401 aa).

Positions 1–48 (MGFFGRLFGSKKQEKATPNRRRWSFATRSSHPENDSSSHSSKRRGDED) are disordered. A calmodulin-binding region spans residues 105 to 121 (EYKAAMKIQSAFRGYLA). 2 consecutive IQ domains span residues 105-133 (EYKA…ALVK) and 134-156 (LQAL…RMQT). Low complexity-rich tracts occupy residues 165 to 176 (RASRSSHVSDSS) and 278 to 287 (RSRTGSSSGG). Disordered stretches follow at residues 165-186 (RASR…IPSS) and 258-296 (SPRK…PFTP).

It belongs to the IQD family. As to quaternary structure, binds to multiple calmodulin (CaM) in the presence of Ca(2+) and CaM-like proteins.

It is found in the nucleus. Its subcellular location is the nuclear body. The protein resides in the cell membrane. Its function is as follows. May be involved in cooperative interactions with calmodulins or calmodulin-like proteins. Recruits calmodulin proteins to microtubules, thus being a potential scaffold in cellular signaling and trafficking. May associate with nucleic acids and regulate gene expression at the transcriptional or post-transcriptional level. The sequence is that of Protein IQ-DOMAIN 24 from Arabidopsis thaliana (Mouse-ear cress).